The primary structure comprises 83 residues: Large ribosomal subunit protein bL27c (83 aa).

Residues 1-21 form a disordered region; that stretch reads MAHKKGAGSTKNGRDSNAKRL.

Belongs to the bacterial ribosomal protein bL27 family.

The protein resides in the plastid. It is found in the chloroplast. The protein is Large ribosomal subunit protein bL27c of Phaeodactylum tricornutum (strain CCAP 1055/1).